Here is an 880-residue protein sequence, read N- to C-terminus: Leucine--tRNA ligase (880 aa).

Residues 46-56 (PYPSGALHMGH) carry the 'HIGH' region motif. The interval 483–502 (SPIKTEPTWRQTTCPDCGGP) is disordered. The 'KMSKS' region signature appears at 638 to 642 (KMSKS). Lys-641 lines the ATP pocket.

The protein belongs to the class-I aminoacyl-tRNA synthetase family.

The protein resides in the cytoplasm. The catalysed reaction is tRNA(Leu) + L-leucine + ATP = L-leucyl-tRNA(Leu) + AMP + diphosphate. This is Leucine--tRNA ligase from Xanthomonas oryzae pv. oryzae (strain PXO99A).